A 159-amino-acid chain; its full sequence is MPKFYCDYCDTYLTHDSPSVRKTHCSGRKHKENVKDYYQKWMEEQAQSLIDKTTAAFQQGKIPPTPFAAPPAGSAMIPPPPSMGGPPRPGMMPAPPMAGPPMMPMMGPPPPGMMPVGHGPGMRPPMGAHMPMMPGPPMMRPPTRPMMLQSRPGMARPDR.

The Matrin-type zinc-finger motif lies at 4–36 (FYCDYCDTYLTHDSPSVRKTHCSGRKHKENVKD). Disordered stretches follow at residues 63 to 95 (PPTP…MPAP) and 139 to 159 (MRPP…RPDR). A compositionally biased stretch (pro residues) spans 77–95 (IPPPPSMGGPPRPGMMPAP).

The protein belongs to the U1 small nuclear ribonucleoprotein C family. Component of the U1 snRNP. The U1 snRNP is composed of the U1 snRNA and the 7 core Sm proteins snrpb, snrpd1, snrpd2, snrpd3, snrpe, snrpf and snrpg that assemble in a heptameric protein ring on the Sm site of the small nuclear RNA to form the core snRNP, and at least 3 U1 snRNP-specific proteins snrnp70/U1-70K, snrpa/U1-A and snrpc/U1-C. snrpc/U1-C interacts with U1 snRNA and the 5' splice-site region of the pre-mRNA.

The protein localises to the nucleus. In terms of biological role, component of the spliceosomal U1 snRNP, which is essential for recognition of the pre-mRNA 5' splice-site and the subsequent assembly of the spliceosome. snrpc/U1-C is directly involved in initial 5' splice-site recognition for both constitutive and regulated alternative splicing. The interaction with the 5' splice-site seems to precede base-pairing between the pre-mRNA and the U1 snRNA. Stimulates commitment or early (E) complex formation by stabilizing the base pairing of the 5' end of the U1 snRNA and the 5' splice-site region. This is U1 small nuclear ribonucleoprotein C from Xenopus tropicalis (Western clawed frog).